Here is a 505-residue protein sequence, read N- to C-terminus: tRNA-2-methylthio-N(6)-dimethylallyladenosine synthase (505 aa).

The interval 1-39 (MGQKAKAQAPTTHPRPHTLSSQVAPALPRRPRHAAPESL) is disordered. Residues 47 to 162 (MKAHLITYGC…IGAALESNER (116 aa)) form the MTTase N-terminal domain. Residues cysteine 56, cysteine 92, cysteine 125, cysteine 194, cysteine 198, and cysteine 201 each contribute to the [4Fe-4S] cluster site. In terms of domain architecture, Radical SAM core spans 180–413 (PSGKLQAHLT…IARQKDWSAR (234 aa)). The 64-residue stretch at 416–479 (AQKVGTVQQV…PHMMYGHILG (64 aa)) folds into the TRAM domain.

Belongs to the methylthiotransferase family. MiaB subfamily. In terms of assembly, monomer. The cofactor is [4Fe-4S] cluster.

It is found in the cytoplasm. It catalyses the reaction N(6)-dimethylallyladenosine(37) in tRNA + (sulfur carrier)-SH + AH2 + 2 S-adenosyl-L-methionine = 2-methylsulfanyl-N(6)-dimethylallyladenosine(37) in tRNA + (sulfur carrier)-H + 5'-deoxyadenosine + L-methionine + A + S-adenosyl-L-homocysteine + 2 H(+). Catalyzes the methylthiolation of N6-(dimethylallyl)adenosine (i(6)A), leading to the formation of 2-methylthio-N6-(dimethylallyl)adenosine (ms(2)i(6)A) at position 37 in tRNAs that read codons beginning with uridine. The sequence is that of tRNA-2-methylthio-N(6)-dimethylallyladenosine synthase from Deinococcus radiodurans (strain ATCC 13939 / DSM 20539 / JCM 16871 / CCUG 27074 / LMG 4051 / NBRC 15346 / NCIMB 9279 / VKM B-1422 / R1).